The primary structure comprises 241 residues: DNA repair protein RecO (241 aa).

This sequence belongs to the RecO family.

Functionally, involved in DNA repair and RecF pathway recombination. In Dinoroseobacter shibae (strain DSM 16493 / NCIMB 14021 / DFL 12), this protein is DNA repair protein RecO.